Here is a 232-residue protein sequence, read N- to C-terminus: 7-cyano-7-deazaguanine synthase (232 aa).

7-17 (CSGGLDSVSLA) lines the ATP pocket. 4 residues coordinate Zn(2+): Cys185, Cys193, Cys196, and Cys199.

The protein belongs to the QueC family. It depends on Zn(2+) as a cofactor.

The enzyme catalyses 7-carboxy-7-deazaguanine + NH4(+) + ATP = 7-cyano-7-deazaguanine + ADP + phosphate + H2O + H(+). It participates in purine metabolism; 7-cyano-7-deazaguanine biosynthesis. Functionally, catalyzes the ATP-dependent conversion of 7-carboxy-7-deazaguanine (CDG) to 7-cyano-7-deazaguanine (preQ(0)). The protein is 7-cyano-7-deazaguanine synthase of Brucella canis (strain ATCC 23365 / NCTC 10854 / RM-666).